Here is a 291-residue protein sequence, read N- to C-terminus: Bifunctional protein FolD (291 aa).

NADP(+) contacts are provided by residues 167 to 169 (GRS), Ser192, and Ile233.

This sequence belongs to the tetrahydrofolate dehydrogenase/cyclohydrolase family. In terms of assembly, homodimer.

It carries out the reaction (6R)-5,10-methylene-5,6,7,8-tetrahydrofolate + NADP(+) = (6R)-5,10-methenyltetrahydrofolate + NADPH. It catalyses the reaction (6R)-5,10-methenyltetrahydrofolate + H2O = (6R)-10-formyltetrahydrofolate + H(+). It functions in the pathway one-carbon metabolism; tetrahydrofolate interconversion. Its function is as follows. Catalyzes the oxidation of 5,10-methylenetetrahydrofolate to 5,10-methenyltetrahydrofolate and then the hydrolysis of 5,10-methenyltetrahydrofolate to 10-formyltetrahydrofolate. The chain is Bifunctional protein FolD from Dichelobacter nodosus (strain VCS1703A).